Here is a 456-residue protein sequence, read N- to C-terminus: Myricetin 3-O-rhamnosyltransferase UGT77B2 (456 aa).

The active-site Proton acceptor is the His19. His19 contacts an anthocyanidin. Asp116 (charge relay) is an active-site residue. Position 147 (His147) interacts with an anthocyanidin. Thr279, Ala334, His351, Asn355, and Glu359 together coordinate UDP-beta-L-rhamnose. An an anthocyanidin-binding site is contributed by Ala374.

This sequence belongs to the UDP-glycosyltransferase family. Expressed in young cromes.

The enzyme catalyses myricetin + UDP-beta-L-rhamnose = myricetin 3-O-alpha-L-rhamnoside + UDP + H(+). It functions in the pathway flavonoid metabolism. Its function is as follows. Rhamnosyltransferase involved in montbretin A (MbA) biosynthesis. Catalyzes the 3-O rhamnosylation of myricetin to produce myricetin 3-O-alpha-L-rhamnoside (MR), a precursor of MbA. MbA is a potent inhibitor of human pancreatic alpha-amylase and is being developed as drug candidate to treat type-2 diabetes. In vitro, is able to transfer UDP-glucose and UDP-xylose with 50-fold less efficiency compared with UDP-rhamnose. In vitro, can use kaempferol or quercetin as substrates, although these two flavonols may not be physiological substrates in vivo. The chain is Myricetin 3-O-rhamnosyltransferase UGT77B2 from Crocosmia x crocosmiiflora (Montbretia).